The primary structure comprises 85 residues: PI-stichotoxin-Hcr2i (85 aa).

An N-terminal signal peptide occupies residues 1–22 (MKGTFLICLILIAGFYFRSIQG). Positions 23–29 (FYFKRIQ) are excised as a propeptide. Positions 33–83 (CSEPKKVGRCRGSFPRFYFDSETGKCTPFIYGGCGGNGNNFETLHACRAIC) constitute a BPTI/Kunitz inhibitor domain. Intrachain disulfides connect Cys-33-Cys-83, Cys-42-Cys-66, and Cys-58-Cys-79.

The protein belongs to the venom Kunitz-type family. Sea anemone type 2 potassium channel toxin subfamily.

Its subcellular location is the secreted. The protein localises to the nematocyst. In terms of biological role, serine protease inhibitor that also shows protective effect in a cytotoxicity model. It binds to all proteases tested (trypsin (Ki=52 nM), alpha-chymotrypsin, cathepsin G, kallikrein, and human neutrophil elastase). It significantly increases neuroblastoma cell viability in an in vitro neurotoxicity model, being a consequence of an effective decrease of reactive oxygen species (ROS) level in the cells. It also seems to protect cells by inhibiting ATP-induced purinoceptor (P2RX7) activation. The polypeptide is PI-stichotoxin-Hcr2i (Radianthus crispa (Leathery sea anemone)).